Here is a 131-residue protein sequence, read N- to C-terminus: Profilin-4 (131 aa).

Residues C13 and C115 are joined by a disulfide bond. The Involved in PIP2 interaction signature appears at 81–97 (VVIRGKKGTGGITIKKT). Phosphothreonine is present on T111.

It belongs to the profilin family. As to quaternary structure, occurs in many kinds of cells as a complex with monomeric actin in a 1:1 ratio. In terms of processing, phosphorylated by MAP kinases. As to expression, expressed predominantly in endosperm but is also found at low levels in all tissues examined, including mature and germinated pollen.

The protein localises to the cytoplasm. It localises to the cytoskeleton. Binds to actin and affects the structure of the cytoskeleton. At high concentrations, profilin prevents the polymerization of actin, whereas it enhances it at low concentrations. By binding to PIP2, it inhibits the formation of IP3 and DG. Has a high affinity for poly-proline. The chain is Profilin-4 (PRO4) from Zea mays (Maize).